We begin with the raw amino-acid sequence, 319 residues long: Malate dehydrogenase (319 aa).

Residues G10–G15 and D34 each bind NAD(+). R83 and R89 together coordinate substrate. Residues N96 and I119 to N121 each bind NAD(+). The substrate site is built by N121 and R152. Residue H176 is the Proton acceptor of the active site.

Belongs to the LDH/MDH superfamily. MDH type 3 family.

It catalyses the reaction (S)-malate + NAD(+) = oxaloacetate + NADH + H(+). Its function is as follows. Catalyzes the reversible oxidation of malate to oxaloacetate. The sequence is that of Malate dehydrogenase from Francisella tularensis subsp. tularensis (strain FSC 198).